We begin with the raw amino-acid sequence, 879 residues long: Levansucrase (879 aa).

The signal sequence occupies residues 1 to 37; the sequence is MTKEHKKMYKAGKYWAVATLVSASILMEVGVTTHADA. 7 consecutive repeat copies span residues 66-81, 82-97, 98-113, 114-129, 130-145, 146-161, and 162-177. A 7 X 16 AA tandem repeats of D-N-A-T-S-G-S-T-K-Q-E-S-S-[IV]-A-N region spans residues 66–177; sequence DNATSGSTKQ…STKQESSVAN (112 aa). 2 stretches are compositionally biased toward polar residues: residues 66–180 and 189–213; these read DNAT…NDTK and NTSN…AATQ. Positions 66 to 213 are disordered; it reads DNATSGSTKQ…NNEQPSAATQ (148 aa). Trp311, Asp312, and Ser382 together coordinate sucrose. Asp312 serves as the catalytic Nucleophile. Position 460 (Asp460) interacts with Ca(2+). Residues Arg465 and Asp466 each coordinate sucrose. Ca(2+)-binding residues include Gln491, Leu528, Asn530, and Asp562. Glu563 serves as a coordination point for sucrose. Glu565 (proton donor/acceptor) is an active-site residue. Position 583 (Arg583) interacts with sucrose. The segment at 743-830 is disordered; that stretch reads SSGLGLKPHQ…TPAKPVQAGQ (88 aa). Residues 754-821 are compositionally biased toward polar residues; it reads VNPSQPTTPA…KPVNPSQPTT (68 aa). Positions 841–845 match the LPXTG sorting signal motif; sequence LPQTG. The residue at position 844 (Thr844) is a Pentaglycyl murein peptidoglycan amidated threonine. A propeptide spans 845-879 (removed by sortase); the sequence is GENNSQSQTMSFIGILLAMFGSLLGFLGIKKRRND.

It belongs to the glycosyl hydrolase 68 family.

It is found in the secreted. It localises to the cell wall. The catalysed reaction is [6)-beta-D-fructofuranosyl-(2-&gt;](n) alpha-D-glucopyranoside + sucrose = [6)-beta-D-fructofuranosyl-(2-&gt;](n+1) alpha-D-glucopyranoside + D-glucose. With respect to regulation, ca(2+) may play an important structural role and promote stability of levansucrase. In terms of biological role, fructosyltransferase that catalyzes the polymerization of the fructose moiety of sucrose to produce levan polymer and the fructo-oligosaccharide (FOS) 1-kestose. Also displays sucrose hydrolase activity. The sequence is that of Levansucrase from Fructilactobacillus sanfranciscensis (Lactobacillus sanfranciscensis).